The following is a 368-amino-acid chain: UDP-N-acetylglucosamine--N-acetylmuramyl-(pentapeptide) pyrophosphoryl-undecaprenol N-acetylglucosamine transferase (368 aa).

UDP-N-acetyl-alpha-D-glucosamine-binding positions include T10–G12, N124, S196, I251, and Q296.

The protein belongs to the glycosyltransferase 28 family. MurG subfamily.

Its subcellular location is the cell membrane. The enzyme catalyses Mur2Ac(oyl-L-Ala-gamma-D-Glu-L-Lys-D-Ala-D-Ala)-di-trans,octa-cis-undecaprenyl diphosphate + UDP-N-acetyl-alpha-D-glucosamine = beta-D-GlcNAc-(1-&gt;4)-Mur2Ac(oyl-L-Ala-gamma-D-Glu-L-Lys-D-Ala-D-Ala)-di-trans,octa-cis-undecaprenyl diphosphate + UDP + H(+). It functions in the pathway cell wall biogenesis; peptidoglycan biosynthesis. In terms of biological role, cell wall formation. Catalyzes the transfer of a GlcNAc subunit on undecaprenyl-pyrophosphoryl-MurNAc-pentapeptide (lipid intermediate I) to form undecaprenyl-pyrophosphoryl-MurNAc-(pentapeptide)GlcNAc (lipid intermediate II). The chain is UDP-N-acetylglucosamine--N-acetylmuramyl-(pentapeptide) pyrophosphoryl-undecaprenol N-acetylglucosamine transferase from Limosilactobacillus fermentum (strain NBRC 3956 / LMG 18251) (Lactobacillus fermentum).